A 381-amino-acid polypeptide reads, in one-letter code: Alcohol dehydrogenase class-3 (381 aa).

Position 49 (Cys-49) interacts with Zn(2+). His-50 serves as a coordination point for NAD(+). 2 residues coordinate an alcohol: Thr-51 and His-71. Zn(2+)-binding residues include His-71, Glu-72, Cys-101, Cys-104, Cys-107, Cys-115, and Cys-179. NAD(+) is bound by residues 204 to 209 (GLGTVG), Asp-228, Lys-233, Ile-274, 297 to 299 (VGV), 322 to 324 (TAF), and Arg-374.

Belongs to the zinc-containing alcohol dehydrogenase family. Class-III subfamily. As to quaternary structure, homodimer. Requires Zn(2+) as cofactor. Expressed at low levels in the leaves.

The protein resides in the cytoplasm. The enzyme catalyses a primary alcohol + NAD(+) = an aldehyde + NADH + H(+). It carries out the reaction a secondary alcohol + NAD(+) = a ketone + NADH + H(+). The catalysed reaction is S-(hydroxymethyl)glutathione + NADP(+) = S-formylglutathione + NADPH + H(+). It catalyses the reaction S-(hydroxymethyl)glutathione + NAD(+) = S-formylglutathione + NADH + H(+). This Zea mays (Maize) protein is Alcohol dehydrogenase class-3 (FDH).